A 574-amino-acid chain; its full sequence is MWPQPRFPPHPAMSEKTQQGKLAAAKKKLKAYWQRKSPGIPAGANRKKKINGSSPDTATSGGYHSPGDSATGIYGEGRASSTTLEDLESQYQELAVALDSSSAIISQLTENINSLVRTSKEEKKHEIHLVQKLGRSLFKLKNQTAEPLAPEPPAGPSKVEQLQDETNHLRKELESVGRQLQAEVENNQMLSLLNRRQEERLREQEERLREQEERLREQEDRLHEQEERLREQEERLCEQEERLREHEERLCEQEERLCEQEERLREQEERLHEQEERLREQEERLCEQEERLREQEERLCEQEERLREQEERLCEQEKLPGQERLLEEVEKLLEQERRQEEQERLLERERLLEEVEKLLEQERQQEEQERLLERERLLEEVEKLLEQERRQEEQERLLERERLLDEVEELLDEVEELLEQERLRQQDERLWQQETLQELERLRELERLRELERMLELGWEALYEQRAEPRSGFEELNNENKSTLQLEQQVKELKKSGGAEEPRGSESAAAARPVAGAPVPQGAWMCGQAGWTPQEHPGLSGEAVGTGEAAGGAGEAACHSFRAAENRELNITII.

A compositionally biased stretch (pro residues) spans 1-11; that stretch reads MWPQPRFPPHP. 2 disordered regions span residues 1-77 and 491-552; these read MWPQ…YGEG and KELK…AAGG. A compositionally biased stretch (polar residues) spans 51 to 62; that stretch reads NGSSPDTATSGG. Residues 157 to 496 adopt a coiled-coil conformation; it reads SKVEQLQDET…EQQVKELKKS (340 aa). The segment covering 491 to 504 has biased composition (basic and acidic residues); the sequence is KELKKSGGAEEPRG. The span at 508–523 shows a compositional bias: low complexity; the sequence is AAAARPVAGAPVPQGA.

Belongs to the GOLGA6 family.

This chain is Golgin subfamily A member 6-like protein 4 (GOLGA6L4), found in Homo sapiens (Human).